The chain runs to 322 residues: MREIDVAVIGAGPSGLFAAYYAGFRGLSVAVVDALPEPGGQVTAMYPEKLIHDVAGFPAIRGRDLIANLVAQAAPFDPRYLLGTRAEKLTYVDGRPVLGLAGGEQLACGAVVITGGLGSFTPRPLPVAERFLGTGIVYFVPQPADLTNRDVLIVGGGDSAFDWASTLQPLARSVTLVHRRERFRAHAATVARVRALPVRIVVNAEVTRLHGGGTVTGAEITVRGGAAELLPVDTVVAALGFTADLGPLTEWGLRLDRRHIVVDSTMATNLPRVFAAGDITEYPGKVRLIATGFGEAATAVNNAAVVIDPAAHLFPGHSSDGS.

FAD-binding residues include serine 14, aspartate 33, glutamine 41, tyrosine 46, alanine 86, phenylalanine 120, aspartate 278, and serine 319.

It belongs to the ferredoxin--NADP reductase type 2 family. In terms of assembly, homodimer. Requires FAD as cofactor.

It catalyses the reaction 2 reduced [2Fe-2S]-[ferredoxin] + NADP(+) + H(+) = 2 oxidized [2Fe-2S]-[ferredoxin] + NADPH. The polypeptide is Ferredoxin--NADP reductase (Salinispora arenicola (strain CNS-205)).